The chain runs to 218 residues: Ribose-5-phosphate isomerase A (218 aa).

Substrate-binding positions include 28-31 (TGST), 81-84 (DGAD), and 94-97 (KGGG). Residue Glu103 is the Proton acceptor of the active site. Lys121 serves as a coordination point for substrate.

The protein belongs to the ribose 5-phosphate isomerase family. In terms of assembly, homodimer.

It catalyses the reaction aldehydo-D-ribose 5-phosphate = D-ribulose 5-phosphate. It participates in carbohydrate degradation; pentose phosphate pathway; D-ribose 5-phosphate from D-ribulose 5-phosphate (non-oxidative stage): step 1/1. Functionally, catalyzes the reversible conversion of ribose-5-phosphate to ribulose 5-phosphate. This Vibrio cholerae serotype O1 (strain ATCC 39541 / Classical Ogawa 395 / O395) protein is Ribose-5-phosphate isomerase A.